We begin with the raw amino-acid sequence, 210 residues long: Thymidylate kinase (210 aa).

10–17 (GPEGAGKS) provides a ligand contact to ATP.

It belongs to the thymidylate kinase family.

The enzyme catalyses dTMP + ATP = dTDP + ADP. Functionally, phosphorylation of dTMP to form dTDP in both de novo and salvage pathways of dTTP synthesis. The polypeptide is Thymidylate kinase (Pseudomonas savastanoi pv. phaseolicola (strain 1448A / Race 6) (Pseudomonas syringae pv. phaseolicola (strain 1448A / Race 6))).